The sequence spans 203 residues: A-type ATP synthase subunit E (203 aa).

Belongs to the V-ATPase E subunit family. As to quaternary structure, has multiple subunits with at least A(3), B(3), C, D, E, F, H, I and proteolipid K(x).

The protein localises to the cell membrane. Component of the A-type ATP synthase that produces ATP from ADP in the presence of a proton gradient across the membrane. This chain is A-type ATP synthase subunit E, found in Methanococcus vannielii (strain ATCC 35089 / DSM 1224 / JCM 13029 / OCM 148 / SB).